The chain runs to 109 residues: Iron-sulfur cluster assembly protein CyaY (109 aa).

This sequence belongs to the frataxin family.

Functionally, involved in iron-sulfur (Fe-S) cluster assembly. May act as a regulator of Fe-S biogenesis. This Acidovorax ebreus (strain TPSY) (Diaphorobacter sp. (strain TPSY)) protein is Iron-sulfur cluster assembly protein CyaY.